The sequence spans 96 residues: Protein Vpr (96 aa).

The segment at 1 to 42 (MEQAPEDQGPQREPHNEWTLELLEELKNEAVRHFPRIWLHGL) is homooligomerization. Serine 79, serine 94, and serine 96 each carry phosphoserine; by host.

It belongs to the HIV-1 VPR protein family. As to quaternary structure, homooligomer, may form homodimer. Interacts with p6-gag region of the Pr55 Gag precursor protein through a (Leu-X-X)4 motif near the C-terminus of the P6gag protein. Interacts with host UNG. May interact with host RAD23A/HHR23A. Interacts with host VPRBP/DCAF1, leading to hijack the CUL4A-RBX1-DDB1-DCAF1/VPRBP complex, mediating ubiquitination of host proteins such as TERT and ZGPAT and arrest of the cell cycle in G2 phase. In terms of processing, phosphorylated on several residues by host. These phosphorylations regulate VPR activity for the nuclear import of the HIV-1 pre-integration complex.

Its subcellular location is the virion. The protein resides in the host nucleus. The protein localises to the host extracellular space. During virus entry, plays a role in the transport of the viral pre-integration (PIC) complex to the host nucleus. This function is crucial for viral infection of non-dividing macrophages. May act directly at the nuclear pore complex, by binding nucleoporins phenylalanine-glycine (FG)-repeat regions. In terms of biological role, during virus replication, may deplete host UNG protein, and incude G2-M cell cycle arrest. Acts by targeting specific host proteins for degradation by the 26S proteasome, through association with the cellular CUL4A-DDB1 E3 ligase complex by direct interaction with host VPRPB/DCAF-1. Cell cycle arrest reportedly occurs within hours of infection and is not blocked by antiviral agents, suggesting that it is initiated by the VPR carried into the virion. Additionally, VPR induces apoptosis in a cell cycle dependent manner suggesting that these two effects are mechanistically linked. Detected in the serum and cerebrospinal fluid of AIDS patient, VPR may also induce cell death to bystander cells. This chain is Protein Vpr, found in Human immunodeficiency virus type 1 group M subtype B (isolate BRU/LAI) (HIV-1).